The sequence spans 80 residues: Lantibiotic Flvalpha.b (80 aa).

A propeptide spans 1 to 38 (MNKNPIYRSEEEAKNIACGNVAAELDENSQALDAINGA) (cleaved by FlvT). 2,3-didehydrobutyrine; by FlvM1 is present on residues threonine 43 and threonine 47. A cross-link (beta-methyllanthionine (Thr-Cys); by FlvM1) is located at residues 52 to 55 (TVGC). The segment at residues 58–68 (SYGLGNGGYCC) is a cross-link (lanthionine (Ser-Cys); by FlvM1). 2 cross-links (beta-methyllanthionine (Thr-Cys); by FlvM1) span residues 69-74 (TYTVEC) and 71-78 (TVECSKTC).

In terms of processing, the lanthionine formed by Ser-58 and Cys-68 forms a putative lipid II binding motif. Maturation of FlvA1 peptides involves the enzymatic conversion of Thr, and Ser into dehydrated AA and the formation of thioether bonds with cysteines. Modifications are processed by the flavecin synthetase FlvM1. This is followed by membrane translocation and cleavage of the modified precursor. Post-translationally, contains DL-lanthionine and DL-beta-methyllanthionine, when coepressed in E.coli with the flavecin synthetase FlvM1.

Its subcellular location is the secreted. In terms of biological role, lanthionine-containing peptide antibiotic (lantibiotic) only active on Gram-positive bacteria in synergy with Flvbeta peptides, which are encoded by the same operon than Flvalpha.a. Shows antibacterial activity in synergy with Flvbeta.b, Flvbeta.c, Flvbeta.e and Flvbeta.g. Does not show antibacterial activity when tested with Flvbeta.a, Flvbeta.d, Flvbeta.f and Flvbeta.h. The bactericidal activity of lantibiotics is based on depolarization of energized bacterial cytoplasmic membranes, initiated by the formation of aqueous transmembrane pores. The chain is Lantibiotic Flvalpha.b from Ruminococcus flavefaciens.